The following is an 842-amino-acid chain: Valine--tRNA ligase (842 aa).

A 'HIGH' region motif is present at residues 86–96; sequence PFTSGELHMGH. The 'KMSKS' region motif lies at 572 to 576; that stretch reads RMSKS. ATP is bound at residue Lys-575.

It belongs to the class-I aminoacyl-tRNA synthetase family. ValS type 2 subfamily.

Its subcellular location is the cytoplasm. It catalyses the reaction tRNA(Val) + L-valine + ATP = L-valyl-tRNA(Val) + AMP + diphosphate. Its function is as follows. Catalyzes the attachment of valine to tRNA(Val). As ValRS can inadvertently accommodate and process structurally similar amino acids such as threonine, to avoid such errors, it has a 'posttransfer' editing activity that hydrolyzes mischarged Thr-tRNA(Val) in a tRNA-dependent manner. The chain is Valine--tRNA ligase from Saccharolobus solfataricus (strain ATCC 35092 / DSM 1617 / JCM 11322 / P2) (Sulfolobus solfataricus).